A 463-amino-acid chain; its full sequence is Nitrogenase vanadium-iron protein beta chain (463 aa).

Residues cysteine 20, cysteine 45, cysteine 104, and serine 142 each contribute to the [8Fe-7S] cluster site.

This sequence belongs to the NifD/NifK/NifE/NifN family. As to quaternary structure, hexamer of two alpha, two beta, and two delta chains. It depends on [8Fe-7S] cluster as a cofactor.

The enzyme catalyses N2 + 8 reduced [2Fe-2S]-[ferredoxin] + 16 ATP + 16 H2O = H2 + 8 oxidized [2Fe-2S]-[ferredoxin] + 2 NH4(+) + 16 ADP + 16 phosphate + 6 H(+). Functionally, this vanadium-iron protein is part of the nitrogenase complex that catalyzes the key enzymatic reactions in nitrogen fixation. The chain is Nitrogenase vanadium-iron protein beta chain (vnfK) from Trichormus variabilis (strain ATCC 29413 / PCC 7937) (Anabaena variabilis).